A 337-amino-acid polypeptide reads, in one-letter code: MLIAQRPTLTEDVVDEYRSRFVIEPLEPGFGYTLGNSLRRTLLSSIPGAAVTSLRIDGVLHEFTSVPGVKEDVTEIVLNVKNLVVSSEHDEPVVMYLRKQGPGAVTAADIAPPAGVEVHNPDLHIATLNAKGKLELELTVERGRGYVSAAQNKTGEQEIGRIPVDSIYSPVLKVTYKVEATRVEQRTDFDRLVVDVETKHAISPRDAVASAGKTLTELFGLARELNVEAEGIDMGPSPTDAALAADLALEIEALDLTVRSYNCLKREGIHSVGELVSRSEADLLDIRNFGQKSIDEVKAKLVGMGLHLKDSPPGFDPSAVVNDFEDDDTSFAEDEQL.

An alpha N-terminal domain (alpha-NTD) region spans residues 1 to 226 (MLIAQRPTLT…ELFGLARELN (226 aa)). Residues 243–337 (LAADLALEIE…DTSFAEDEQL (95 aa)) form an alpha C-terminal domain (alpha-CTD) region. A disordered region spans residues 315-337 (FDPSAVVNDFEDDDTSFAEDEQL). Acidic residues predominate over residues 323–337 (DFEDDDTSFAEDEQL).

Belongs to the RNA polymerase alpha chain family. Homodimer. The RNAP catalytic core consists of 2 alpha, 1 beta, 1 beta' and 1 omega subunit. When a sigma factor is associated with the core the holoenzyme is formed, which can initiate transcription.

It carries out the reaction RNA(n) + a ribonucleoside 5'-triphosphate = RNA(n+1) + diphosphate. In terms of biological role, DNA-dependent RNA polymerase catalyzes the transcription of DNA into RNA using the four ribonucleoside triphosphates as substrates. This Kineococcus radiotolerans (strain ATCC BAA-149 / DSM 14245 / SRS30216) protein is DNA-directed RNA polymerase subunit alpha.